The primary structure comprises 87 residues: Cell division protein ZapA (87 aa).

Residues 64-87 adopt a coiled-coil conformation; that stretch reads VHDYIKLKEEYDRLLQKLHKEKDE.

Belongs to the ZapA family. Type 2 subfamily. As to quaternary structure, homodimer. Interacts with FtsZ.

The protein resides in the cytoplasm. Its function is as follows. Activator of cell division through the inhibition of FtsZ GTPase activity, therefore promoting FtsZ assembly into bundles of protofilaments necessary for the formation of the division Z ring. It is recruited early at mid-cell but it is not essential for cell division. This Geobacillus sp. (strain WCH70) protein is Cell division protein ZapA.